The sequence spans 276 residues: Large ribosomal subunit protein uL2 (276 aa).

Disordered regions lie at residues 35–55 (APLHKKGGRNNQGRLTVRHQG) and 222–276 (GSVM…RRKK). The segment covering 258 to 276 (KTRKKNKHSDKYIVRRRKK) has biased composition (basic residues).

The protein belongs to the universal ribosomal protein uL2 family. As to quaternary structure, part of the 50S ribosomal subunit. Forms a bridge to the 30S subunit in the 70S ribosome.

One of the primary rRNA binding proteins. Required for association of the 30S and 50S subunits to form the 70S ribosome, for tRNA binding and peptide bond formation. It has been suggested to have peptidyltransferase activity; this is somewhat controversial. Makes several contacts with the 16S rRNA in the 70S ribosome. The polypeptide is Large ribosomal subunit protein uL2 (Shouchella clausii (strain KSM-K16) (Alkalihalobacillus clausii)).